Reading from the N-terminus, the 509-residue chain is tRNA-2-methylthio-N(6)-dimethylallyladenosine synthase (509 aa).

The segment covering 1–15 (MNEQQRLASQQVNSS) has biased composition (polar residues). The segment at 1-26 (MNEQQRLASQQVNSSTKKEEKDYSKY) is disordered. Positions 16–25 (TKKEEKDYSK) are enriched in basic and acidic residues. Residues 66–184 (RKFYIRTYGC…LPYILKDAMF (119 aa)) enclose the MTTase N-terminal domain. 6 residues coordinate [4Fe-4S] cluster: Cys75, Cys111, Cys145, Cys221, Cys225, and Cys228. The region spanning 207–437 (RRGDIKAWVN…NALVNKLAIE (231 aa)) is the Radical SAM core domain. In terms of domain architecture, TRAM spans 440-503 (DRYKGQIVEV…TWSLNGELVE (64 aa)).

The protein belongs to the methylthiotransferase family. MiaB subfamily. Monomer. [4Fe-4S] cluster serves as cofactor.

It localises to the cytoplasm. The catalysed reaction is N(6)-dimethylallyladenosine(37) in tRNA + (sulfur carrier)-SH + AH2 + 2 S-adenosyl-L-methionine = 2-methylsulfanyl-N(6)-dimethylallyladenosine(37) in tRNA + (sulfur carrier)-H + 5'-deoxyadenosine + L-methionine + A + S-adenosyl-L-homocysteine + 2 H(+). In terms of biological role, catalyzes the methylthiolation of N6-(dimethylallyl)adenosine (i(6)A), leading to the formation of 2-methylthio-N6-(dimethylallyl)adenosine (ms(2)i(6)A) at position 37 in tRNAs that read codons beginning with uridine. In Bacillus cereus (strain ZK / E33L), this protein is tRNA-2-methylthio-N(6)-dimethylallyladenosine synthase.